The primary structure comprises 580 residues: MAMLLRARCFHRLAIPDPRRILYKDYRTAIPQNFSNYESMKHDFKIEIPEYFNFAKDVLDQWTNTEKTGKRLSNPAFWWVDGNGKEVRWSFEELGSLSRKFANILTEACSLQRGDRVMVILPKIPEWWLANVACLRTGTVLIPGTTQLTQKDILYRLQSSKSKCIITDDTLAPAVDIVAAKCENLHSKLIVSQHSREGWGNLKEMMKYASDSHTCVDTKHNELMAIYFTSGTTGPPKMIGHTHSSFGLGLSVNGRFWLDLIASDVMWNTSDTGWAKSAWSSVFSPWTQGACVFAHYLPRFDSTSILQTLSKFPITVFCSAPTAYRMLIQNDITSYKFNSLKHCVSAGEPINPEVMEQWKKKTGLDIYEGYGQTETVLICGNFKGMKIKPGSMGKPSPAFNVEILDENGTILPPGQEGDIAVQVLPDRPFGLFTHYVDNPSKTASTLRGNFYITGDRGYMDEDGYFWFVARSDDVILSSGYRIGPFEVESALIEHPSIAESAVVSSPDPIRGEVVKAFIVLNPDYKLHDQEQLKKEIQEHVKKTTAPYKYPRKIEFIEELPKTVSGKVKRNELRRKEWTTT.

The transit peptide at 1 to 21 directs the protein to the mitochondrion; it reads MAMLLRARCFHRLAIPDPRRI. Lys67 and Lys100 each carry N6-succinyllysine. An N6-acetyllysine modification is found at Lys151. Residues 229 to 237, 368 to 373, Asp455, Arg470, and Lys566 contribute to the ATP site; these read TSGTTGPPK and EGYGQT.

It belongs to the ATP-dependent AMP-binding enzyme family. It depends on Mg(2+) as a cofactor. Requires Mn(2+) as cofactor.

It is found in the mitochondrion. Its subcellular location is the mitochondrion matrix. It carries out the reaction a medium-chain fatty acid + ATP + CoA = a medium-chain fatty acyl-CoA + AMP + diphosphate. The catalysed reaction is propanoate + ATP + CoA = propanoyl-CoA + AMP + diphosphate. The enzyme catalyses butanoate + ATP + CoA = butanoyl-CoA + AMP + diphosphate. It catalyses the reaction 2-methylpropanoate + ATP + CoA = 2-methylpropanoyl-CoA + AMP + diphosphate. It carries out the reaction 2-methylbutanoate + ATP + CoA = 2-methylbutanoyl-CoA + AMP + diphosphate. The catalysed reaction is octanoate + ATP + CoA = octanoyl-CoA + AMP + diphosphate. Functionally, catalyzes the activation of fatty acids by CoA to produce an acyl-CoA, the first step in fatty acid metabolism. Capable of activating medium-chain fatty acids with a preference for isobutyrate among fatty acids with 2-6 carbon atoms. The chain is Acyl-coenzyme A synthetase ACSM3, mitochondrial (Acsm3) from Rattus norvegicus (Rat).